The chain runs to 221 residues: Crossover junction endodeoxyribonuclease RuvC (221 aa).

Catalysis depends on residues D12, E73, and D146. Positions 12, 73, and 146 each coordinate Mg(2+). Residues 169–221 are disordered; it reads SQYSEQELEKRRRVQQGKLGKAKSTYNAEQAQSHASDPAKAAHPSQFQRTDTN. A compositionally biased stretch (polar residues) spans 192–203; sequence STYNAEQAQSHA.

Belongs to the RuvC family. As to quaternary structure, homodimer which binds Holliday junction (HJ) DNA. The HJ becomes 2-fold symmetrical on binding to RuvC with unstacked arms; it has a different conformation from HJ DNA in complex with RuvA. In the full resolvosome a probable DNA-RuvA(4)-RuvB(12)-RuvC(2) complex forms which resolves the HJ. Mg(2+) serves as cofactor.

Its subcellular location is the cytoplasm. It catalyses the reaction Endonucleolytic cleavage at a junction such as a reciprocal single-stranded crossover between two homologous DNA duplexes (Holliday junction).. Functionally, the RuvA-RuvB-RuvC complex processes Holliday junction (HJ) DNA during genetic recombination and DNA repair. Endonuclease that resolves HJ intermediates. Cleaves cruciform DNA by making single-stranded nicks across the HJ at symmetrical positions within the homologous arms, yielding a 5'-phosphate and a 3'-hydroxyl group; requires a central core of homology in the junction. The consensus cleavage sequence is 5'-(A/T)TT(C/G)-3'. Cleavage occurs on the 3'-side of the TT dinucleotide at the point of strand exchange. HJ branch migration catalyzed by RuvA-RuvB allows RuvC to scan DNA until it finds its consensus sequence, where it cleaves and resolves the cruciform DNA. This Corynebacterium glutamicum (strain ATCC 13032 / DSM 20300 / JCM 1318 / BCRC 11384 / CCUG 27702 / LMG 3730 / NBRC 12168 / NCIMB 10025 / NRRL B-2784 / 534) protein is Crossover junction endodeoxyribonuclease RuvC.